The chain runs to 394 residues: Acetate kinase (394 aa).

Position 8 (N8) interacts with Mg(2+). K15 contributes to the ATP binding site. R86 contacts substrate. D143 acts as the Proton donor/acceptor in catalysis. ATP contacts are provided by residues 201–205, 276–278, and 324–328; these read HLGNG, DCR, and GIGEN. Residue E378 participates in Mg(2+) binding.

It belongs to the acetokinase family. Homodimer. Mg(2+) is required as a cofactor. Requires Mn(2+) as cofactor.

It localises to the cytoplasm. The enzyme catalyses acetate + ATP = acetyl phosphate + ADP. It participates in metabolic intermediate biosynthesis; acetyl-CoA biosynthesis; acetyl-CoA from acetate: step 1/2. Functionally, catalyzes the formation of acetyl phosphate from acetate and ATP. Can also catalyze the reverse reaction. The polypeptide is Acetate kinase (Dichelobacter nodosus (strain VCS1703A)).